The following is a 387-amino-acid chain: 3-ketoacyl-CoA thiolase (387 aa).

Cys-91 acts as the Acyl-thioester intermediate in catalysis. Residues His-343 and Cys-373 each act as proton acceptor in the active site.

This sequence belongs to the thiolase-like superfamily. Thiolase family. As to quaternary structure, heterotetramer of two alpha chains (FadB) and two beta chains (FadA).

It localises to the cytoplasm. The catalysed reaction is an acyl-CoA + acetyl-CoA = a 3-oxoacyl-CoA + CoA. It participates in lipid metabolism; fatty acid beta-oxidation. Functionally, catalyzes the final step of fatty acid oxidation in which acetyl-CoA is released and the CoA ester of a fatty acid two carbons shorter is formed. The chain is 3-ketoacyl-CoA thiolase from Shigella boydii serotype 4 (strain Sb227).